A 598-amino-acid chain; its full sequence is Fumarate reductase flavoprotein subunit (598 aa).

Residues 12-16 (GAGGA), 36-38 (ISK), 44-52 (SHTVAAEGG), 156-158 (HFV), and D212 each bind FAD. H45 carries the tele-8alpha-FAD histidine modification. Catalysis depends on residues H233 and R249. Residues 356–357 (HY), E380, and 391–397 (RLGSNSL) contribute to the FAD site. The disordered stretch occupies residues 577 to 598 (AKRVYGGEADAQEKSDKEQANG). The span at 587–598 (AQEKSDKEQANG) shows a compositional bias: basic and acidic residues.

It belongs to the FAD-dependent oxidoreductase 2 family. FRD/SDH subfamily. In terms of assembly, part of an enzyme complex containing four subunits: a flavoprotein (FrdA), an iron-sulfur protein (FrdB), and two hydrophobic anchor proteins (FrdC and FrdD). Interacts with SdhE. Requires FAD as cofactor.

It localises to the cell inner membrane. The catalysed reaction is a quinone + succinate = fumarate + a quinol. It catalyses the reaction a menaquinone + succinate = a menaquinol + fumarate. In terms of biological role, two distinct, membrane-bound, FAD-containing enzymes are responsible for the catalysis of fumarate and succinate interconversion; the fumarate reductase is used in anaerobic growth, and the succinate dehydrogenase is used in aerobic growth. This is Fumarate reductase flavoprotein subunit from Serratia sp. (strain ATCC 39006) (Prodigiosinella confusarubida).